The following is a 141-amino-acid chain: Large ribosomal subunit protein uL11 (141 aa).

It belongs to the universal ribosomal protein uL11 family. In terms of assembly, part of the ribosomal stalk of the 50S ribosomal subunit. Interacts with L10 and the large rRNA to form the base of the stalk. L10 forms an elongated spine to which L12 dimers bind in a sequential fashion forming a multimeric L10(L12)X complex. Post-translationally, one or more lysine residues are methylated.

Forms part of the ribosomal stalk which helps the ribosome interact with GTP-bound translation factors. In Aliarcobacter butzleri (strain RM4018) (Arcobacter butzleri), this protein is Large ribosomal subunit protein uL11.